We begin with the raw amino-acid sequence, 207 residues long: Large ribosomal subunit protein uL4 (207 aa).

The tract at residues 44–78 (MRQGTHKTKNRAEVSGGGRKPWRQKGTGRARQGSI) is disordered.

This sequence belongs to the universal ribosomal protein uL4 family. Part of the 50S ribosomal subunit.

One of the primary rRNA binding proteins, this protein initially binds near the 5'-end of the 23S rRNA. It is important during the early stages of 50S assembly. It makes multiple contacts with different domains of the 23S rRNA in the assembled 50S subunit and ribosome. Its function is as follows. Forms part of the polypeptide exit tunnel. This is Large ribosomal subunit protein uL4 from Geobacillus kaustophilus (strain HTA426).